A 291-amino-acid polypeptide reads, in one-letter code: tRNA dimethylallyltransferase (291 aa).

ATP is bound at residue 17–24; the sequence is GPTASGKS. 19 to 24 contributes to the substrate binding site; sequence TASGKS.

This sequence belongs to the IPP transferase family. In terms of assembly, monomer. The cofactor is Mg(2+).

It catalyses the reaction adenosine(37) in tRNA + dimethylallyl diphosphate = N(6)-dimethylallyladenosine(37) in tRNA + diphosphate. In terms of biological role, catalyzes the transfer of a dimethylallyl group onto the adenine at position 37 in tRNAs that read codons beginning with uridine, leading to the formation of N6-(dimethylallyl)adenosine (i(6)A). This chain is tRNA dimethylallyltransferase, found in Cereibacter sphaeroides (strain ATCC 17025 / ATH 2.4.3) (Rhodobacter sphaeroides).